The following is a 203-amino-acid chain: GTP cyclohydrolase-2 (203 aa).

49–53 (RIHSE) contributes to the GTP binding site. Zn(2+) contacts are provided by Cys-54, Cys-65, and Cys-67. GTP is bound by residues Gln-70, 92–94 (EGR), and Thr-114. Catalysis depends on Asp-126, which acts as the Proton acceptor. Arg-128 functions as the Nucleophile in the catalytic mechanism. Residues Thr-149 and Lys-154 each coordinate GTP.

The protein belongs to the GTP cyclohydrolase II family. It depends on Zn(2+) as a cofactor.

The enzyme catalyses GTP + 4 H2O = 2,5-diamino-6-hydroxy-4-(5-phosphoribosylamino)-pyrimidine + formate + 2 phosphate + 3 H(+). It functions in the pathway cofactor biosynthesis; riboflavin biosynthesis; 5-amino-6-(D-ribitylamino)uracil from GTP: step 1/4. Its function is as follows. Catalyzes the conversion of GTP to 2,5-diamino-6-ribosylamino-4(3H)-pyrimidinone 5'-phosphate (DARP), formate and pyrophosphate. This chain is GTP cyclohydrolase-2, found in Shewanella sp. (strain MR-7).